We begin with the raw amino-acid sequence, 339 residues long: Fructose-1,6-bisphosphatase isozyme 2 (339 aa).

Residues 3–10 (DRSPFETD) are important for interaction with ALDOA. AMP is bound by residues Val-18 and 28–32 (TGELT). Residues Asp-69 and Glu-98 each coordinate Mg(2+). 113-114 (KY) serves as a coordination point for AMP. Mg(2+)-binding residues include Asp-119, Leu-121, and Asp-122. Asp-122 provides a ligand contact to substrate. AMP is bound at residue Arg-141. A Nuclear localization signal motif is present at residues 204-208 (KKKGK). 213-216 (NEGY) is a substrate binding site. 2 positions are modified to phosphotyrosine: Tyr-216 and Tyr-219. Residues 245-249 (YVGSM), Tyr-265, and Lys-275 each bind substrate. Glu-281 contacts Mg(2+).

Belongs to the FBPase class 1 family. As to quaternary structure, homotetramer. Interacts with ALDOA; the interaction blocks inhibition by physiological concentrations of AMP and reduces inhibition by Ca(2+). Interacts with alpha-actinin and F-actin. Requires Mg(2+) as cofactor.

It localises to the cell junction. It is found in the cytoplasm. The protein resides in the nucleus. The protein localises to the myofibril. Its subcellular location is the sarcomere. It localises to the z line. The catalysed reaction is beta-D-fructose 1,6-bisphosphate + H2O = beta-D-fructose 6-phosphate + phosphate. It functions in the pathway carbohydrate biosynthesis; gluconeogenesis. Its activity is regulated as follows. Subject to complex allosteric regulation. The enzyme can assume an active R-state, or an inactive T-state. Intermediate conformations may exist. AMP acts as an allosteric inhibitor. Fructose 2,6-bisphosphate acts as a competitive inhibitor. Strongly inhibited by Ca(2+). Catalyzes the hydrolysis of fructose 1,6-bisphosphate to fructose 6-phosphate in the presence of divalent cations and probably participates in glycogen synthesis from carbohydrate precursors, such as lactate. The polypeptide is Fructose-1,6-bisphosphatase isozyme 2 (Fbp2) (Rattus norvegicus (Rat)).